The primary structure comprises 406 residues: Nodal homolog (406 aa).

An N-terminal signal peptide occupies residues 1–18 (MAFLTAVLYLGFACISQG). A propeptide spanning residues 19 to 281 (LPTWPDRVES…RVPGIRRHRR (263 aa)) is cleaved from the precursor. 3 N-linked (GlcNAc...) asparagine glycosylation sites follow: Asn71, Asn136, and Asn172. The interval 195-222 (KERAERGSGMSNAEFIDAPGPSQQYNPH) is disordered. Intrachain disulfides connect Cys306–Cys372, Cys335–Cys403, and Cys339–Cys405. Asn344 carries an N-linked (GlcNAc...) asparagine glycan.

Belongs to the TGF-beta family. Homodimer; disulfide-linked. Interacts with, and is inhibited by cer1 and gdf10/bmp3b. In terms of tissue distribution, in the first phase of expression, localized to the vegetal region of the blastula. During gastrulation (stage 10.5), this expression disappears and instead becomes localized to the dorsal marginal zone, with enrichment in the organizer. During the second phase of expression in neurulae and tailbud embryos, expression restarts firstly in two symmetric patches near the posterior end of the notochord, and then in a large asymmetrical domain in the left lateral plate mesoderm.

Its subcellular location is the secreted. Cooperation and regulatory loops of multiple nodals are essential for mesendoderm patterning in early embryos. Essential for mesoderm formation and axial patterning during embryonic development. Activates the activin-like signaling pathway to induce dorsal and ventral mesoderm in animal cap ectoderm. In addition, also dorsalizes ventral marginal zone (VMZ) tissues during gastrulation. Acts in a downstream signaling cascade via cripto and cer1 to mediate cardiogenesis in embryonic mesoderm. Directs the orientation of the left-right axis by driving the left-specific gene cascade in the left lateral plate mesoderm. The polypeptide is Nodal homolog (Xenopus laevis (African clawed frog)).